The following is a 213-amino-acid chain: Protein big brother (213 aa).

It belongs to the CBF-beta family.

It is found in the nucleus. Functionally, regulates the DNA-binding properties of Runt. The protein is Protein big brother (Bgb) of Drosophila melanogaster (Fruit fly).